The chain runs to 423 residues: 3-isopropylmalate dehydratase large subunit 1 (423 aa).

[4Fe-4S] cluster contacts are provided by C302, C362, and C365.

It belongs to the aconitase/IPM isomerase family. LeuC type 2 subfamily. In terms of assembly, heterodimer of LeuC and LeuD. It depends on [4Fe-4S] cluster as a cofactor.

The catalysed reaction is (2R,3S)-3-isopropylmalate = (2S)-2-isopropylmalate. The protein operates within amino-acid biosynthesis; L-leucine biosynthesis; L-leucine from 3-methyl-2-oxobutanoate: step 2/4. In terms of biological role, catalyzes the isomerization between 2-isopropylmalate and 3-isopropylmalate, via the formation of 2-isopropylmaleate. The protein is 3-isopropylmalate dehydratase large subunit 1 of Pyrococcus abyssi (strain GE5 / Orsay).